A 124-amino-acid chain; its full sequence is Small ribosomal subunit protein uS12 (124 aa).

Asp-89 carries the post-translational modification 3-methylthioaspartic acid.

The protein belongs to the universal ribosomal protein uS12 family. As to quaternary structure, part of the 30S ribosomal subunit. Contacts proteins S8 and S17. May interact with IF1 in the 30S initiation complex.

Its function is as follows. With S4 and S5 plays an important role in translational accuracy. Interacts with and stabilizes bases of the 16S rRNA that are involved in tRNA selection in the A site and with the mRNA backbone. Located at the interface of the 30S and 50S subunits, it traverses the body of the 30S subunit contacting proteins on the other side and probably holding the rRNA structure together. The combined cluster of proteins S8, S12 and S17 appears to hold together the shoulder and platform of the 30S subunit. The polypeptide is Small ribosomal subunit protein uS12 (Shewanella piezotolerans (strain WP3 / JCM 13877)).